A 209-amino-acid chain; its full sequence is A-type ATP synthase subunit D (209 aa).

The protein belongs to the V-ATPase D subunit family. In terms of assembly, has multiple subunits with at least A(3), B(3), C, D, E, F, H, I and proteolipid K(x).

Its subcellular location is the cell membrane. Component of the A-type ATP synthase that produces ATP from ADP in the presence of a proton gradient across the membrane. The sequence is that of A-type ATP synthase subunit D from Methanosarcina acetivorans (strain ATCC 35395 / DSM 2834 / JCM 12185 / C2A).